The following is an 88-amino-acid chain: Gene 30 protein (88 aa).

This is Gene 30 protein (30) from Mycobacterium (Mycobacteriophage D29).